The primary structure comprises 668 residues: DNA-directed RNA polymerase subunit beta' (668 aa).

Residues Cys-71, Cys-73, Cys-91, and Cys-94 each coordinate Zn(2+). The Mg(2+) site is built by Asp-505, Asp-507, and Asp-509.

This sequence belongs to the RNA polymerase beta' chain family. RpoC1 subfamily. In terms of assembly, in plastids the minimal PEP RNA polymerase catalytic core is composed of four subunits: alpha, beta, beta', and beta''. When a (nuclear-encoded) sigma factor is associated with the core the holoenzyme is formed, which can initiate transcription. It depends on Mg(2+) as a cofactor. Requires Zn(2+) as cofactor.

Its subcellular location is the plastid. The protein resides in the chloroplast. It catalyses the reaction RNA(n) + a ribonucleoside 5'-triphosphate = RNA(n+1) + diphosphate. In terms of biological role, DNA-dependent RNA polymerase catalyzes the transcription of DNA into RNA using the four ribonucleoside triphosphates as substrates. This Mesostigma viride (Green alga) protein is DNA-directed RNA polymerase subunit beta'.